Consider the following 438-residue polypeptide: Tyrosine--tRNA ligase (438 aa).

Tyr47 serves as a coordination point for L-tyrosine. The short motif at 52–61 is the 'HIGH' region element; sequence PTATSLHVGG. Residues Tyr183 and Gln187 each contribute to the L-tyrosine site. The short motif at 243 to 247 is the 'KMSKS' region element; that stretch reads KMGKT. Lys246 provides a ligand contact to ATP. The 67-residue stretch at 370–436 folds into the S4 RNA-binding domain; the sequence is LWIVEALQTA…GKRKYALLKI (67 aa).

This sequence belongs to the class-I aminoacyl-tRNA synthetase family. TyrS type 1 subfamily. In terms of assembly, homodimer.

Its subcellular location is the cytoplasm. It carries out the reaction tRNA(Tyr) + L-tyrosine + ATP = L-tyrosyl-tRNA(Tyr) + AMP + diphosphate + H(+). Catalyzes the attachment of tyrosine to tRNA(Tyr) in a two-step reaction: tyrosine is first activated by ATP to form Tyr-AMP and then transferred to the acceptor end of tRNA(Tyr). In Rhodopirellula baltica (strain DSM 10527 / NCIMB 13988 / SH1), this protein is Tyrosine--tRNA ligase.